The primary structure comprises 144 residues: Signal recognition particle 19 kDa protein (144 aa).

The segment at 117–144 (TRTQKTGGGDQSLQQGEGSKKGKGKKKK) is disordered.

It belongs to the SRP19 family. Component of a signal recognition particle complex that consists of a 7SL RNA molecule of 300 nucleotides and six protein subunits: SRP72, SRP68, SRP54, SRP19, SRP14 and SRP9. Interacts with IPO5, IPO7, IPO8, KPNB1 and TNPO1. Interactions with IPO8 and TNPO1 may be involved in SRP19 import into the nucleus.

It localises to the cytoplasm. Its subcellular location is the nucleus. The protein resides in the nucleolus. It is found in the nucleoplasm. In terms of biological role, component of the signal recognition particle (SRP) complex, a ribonucleoprotein complex that mediates the cotranslational targeting of secretory and membrane proteins to the endoplasmic reticulum (ER). Binds directly to 7SL RNA. Mediates binding of SRP54 to the SRP complex. This is Signal recognition particle 19 kDa protein from Canis lupus familiaris (Dog).